An 879-amino-acid polypeptide reads, in one-letter code: Valine--tRNA ligase (879 aa).

A 'HIGH' region motif is present at residues 43 to 53 (PNVTGVLHMGH). The 'KMSKS' region motif lies at 534–538 (KMSKS). Residue lysine 537 participates in ATP binding. A coiled-coil region spans residues 807 to 878 (LGNMIDVEAE…LKESIAALKK (72 aa)).

Belongs to the class-I aminoacyl-tRNA synthetase family. ValS type 1 subfamily. In terms of assembly, monomer.

It localises to the cytoplasm. It carries out the reaction tRNA(Val) + L-valine + ATP = L-valyl-tRNA(Val) + AMP + diphosphate. Catalyzes the attachment of valine to tRNA(Val). As ValRS can inadvertently accommodate and process structurally similar amino acids such as threonine, to avoid such errors, it has a 'posttransfer' editing activity that hydrolyzes mischarged Thr-tRNA(Val) in a tRNA-dependent manner. The polypeptide is Valine--tRNA ligase (Bacteroides thetaiotaomicron (strain ATCC 29148 / DSM 2079 / JCM 5827 / CCUG 10774 / NCTC 10582 / VPI-5482 / E50)).